The chain runs to 574 residues: Proline--tRNA ligase (574 aa).

The protein belongs to the class-II aminoacyl-tRNA synthetase family. ProS type 1 subfamily. Homodimer.

The protein localises to the cytoplasm. It carries out the reaction tRNA(Pro) + L-proline + ATP = L-prolyl-tRNA(Pro) + AMP + diphosphate. Its function is as follows. Catalyzes the attachment of proline to tRNA(Pro) in a two-step reaction: proline is first activated by ATP to form Pro-AMP and then transferred to the acceptor end of tRNA(Pro). As ProRS can inadvertently accommodate and process non-cognate amino acids such as alanine and cysteine, to avoid such errors it has two additional distinct editing activities against alanine. One activity is designated as 'pretransfer' editing and involves the tRNA(Pro)-independent hydrolysis of activated Ala-AMP. The other activity is designated 'posttransfer' editing and involves deacylation of mischarged Ala-tRNA(Pro). The misacylated Cys-tRNA(Pro) is not edited by ProRS. The polypeptide is Proline--tRNA ligase (Sodalis glossinidius (strain morsitans)).